The sequence spans 230 residues: MAHPTQLGFKDAAMPVMEELLHFHDHALMIVLLISTLVLYIITAMVSTKLTNKYILDSQEIEIVWTILPAVILVLIALPSLRILYLMDEINDPHLTIKAMGHQWYWSYEYTDYENLGFDSYMVPTQDLAPGQFRLLETDHRMVVPMESPVRVLVSAEDVLHSWAVPSLGVKMDAVPGRLNQAAFIASRPGVFYGQCSEICGANHSFMPIVVEAVPLEHFENWSSLMLEDA.

Residues 1–14 are Mitochondrial intermembrane-facing; it reads MAHPTQLGFKDAAM. The chain crosses the membrane as a helical span at residues 15–45; the sequence is PVMEELLHFHDHALMIVLLISTLVLYIITAM. Residues 46–59 lie on the Mitochondrial matrix side of the membrane; the sequence is VSTKLTNKYILDSQ. The helical transmembrane segment at 60 to 87 threads the bilayer; sequence EIEIVWTILPAVILVLIALPSLRILYLM. Residues 88-230 lie on the Mitochondrial intermembrane side of the membrane; the sequence is DEINDPHLTI…NWSSLMLEDA (143 aa). Cu cation is bound by residues H161, C196, E198, C200, H204, and M207. Residue E198 coordinates Mg(2+).

The protein belongs to the cytochrome c oxidase subunit 2 family. In terms of assembly, component of the cytochrome c oxidase (complex IV, CIV), a multisubunit enzyme composed of 14 subunits. The complex is composed of a catalytic core of 3 subunits MT-CO1, MT-CO2 and MT-CO3, encoded in the mitochondrial DNA, and 11 supernumerary subunits COX4I, COX5A, COX5B, COX6A, COX6B, COX6C, COX7A, COX7B, COX7C, COX8 and NDUFA4, which are encoded in the nuclear genome. The complex exists as a monomer or a dimer and forms supercomplexes (SCs) in the inner mitochondrial membrane with NADH-ubiquinone oxidoreductase (complex I, CI) and ubiquinol-cytochrome c oxidoreductase (cytochrome b-c1 complex, complex III, CIII), resulting in different assemblies (supercomplex SCI(1)III(2)IV(1) and megacomplex MCI(2)III(2)IV(2)). Found in a complex with TMEM177, COA6, COX18, COX20, SCO1 and SCO2. Interacts with TMEM177 in a COX20-dependent manner. Interacts with COX20. Interacts with COX16. It depends on Cu cation as a cofactor.

It is found in the mitochondrion inner membrane. The catalysed reaction is 4 Fe(II)-[cytochrome c] + O2 + 8 H(+)(in) = 4 Fe(III)-[cytochrome c] + 2 H2O + 4 H(+)(out). Component of the cytochrome c oxidase, the last enzyme in the mitochondrial electron transport chain which drives oxidative phosphorylation. The respiratory chain contains 3 multisubunit complexes succinate dehydrogenase (complex II, CII), ubiquinol-cytochrome c oxidoreductase (cytochrome b-c1 complex, complex III, CIII) and cytochrome c oxidase (complex IV, CIV), that cooperate to transfer electrons derived from NADH and succinate to molecular oxygen, creating an electrochemical gradient over the inner membrane that drives transmembrane transport and the ATP synthase. Cytochrome c oxidase is the component of the respiratory chain that catalyzes the reduction of oxygen to water. Electrons originating from reduced cytochrome c in the intermembrane space (IMS) are transferred via the dinuclear copper A center (CU(A)) of subunit 2 and heme A of subunit 1 to the active site in subunit 1, a binuclear center (BNC) formed by heme A3 and copper B (CU(B)). The BNC reduces molecular oxygen to 2 water molecules using 4 electrons from cytochrome c in the IMS and 4 protons from the mitochondrial matrix. The protein is Cytochrome c oxidase subunit 2 (mt-co2) of Cyprinus carpio (Common carp).